A 394-amino-acid polypeptide reads, in one-letter code: Beta-ketothiolase BktB (394 aa).

Cys90 serves as the catalytic Acyl-thioester intermediate. Residues His350 and Cys380 each act as proton acceptor in the active site.

This sequence belongs to the thiolase-like superfamily. Thiolase family.

The catalysed reaction is an acyl-CoA + acetyl-CoA = a 3-oxoacyl-CoA + CoA. The enzyme catalyses 2 acetyl-CoA = acetoacetyl-CoA + CoA. Required for efficient production of poly(beta-hydroxybutyrate-co-beta-hydroxyvalerate) (PHBV). Catalyzes the condensation of acetyl-CoA and propionyl-CoA to form beta-ketovaleryl-CoA, and the condensation of two acetyl-CoA molecules to form acetoacetyl-CoA. This Cupriavidus necator (strain ATCC 17699 / DSM 428 / KCTC 22496 / NCIMB 10442 / H16 / Stanier 337) (Ralstonia eutropha) protein is Beta-ketothiolase BktB (bktB).